Here is a 200-residue protein sequence, read N- to C-terminus: Dephospho-CoA kinase (200 aa).

Residues 4–200 (VIGLTGGIAS…AILKKWNIID (197 aa)) form the DPCK domain. 12–17 (ASGKST) provides a ligand contact to ATP.

This sequence belongs to the CoaE family.

The protein localises to the cytoplasm. It carries out the reaction 3'-dephospho-CoA + ATP = ADP + CoA + H(+). It functions in the pathway cofactor biosynthesis; coenzyme A biosynthesis; CoA from (R)-pantothenate: step 5/5. Functionally, catalyzes the phosphorylation of the 3'-hydroxyl group of dephosphocoenzyme A to form coenzyme A. This is Dephospho-CoA kinase from Bacillus cereus (strain ZK / E33L).